A 510-amino-acid chain; its full sequence is 2,3-bisphosphoglycerate-independent phosphoglycerate mutase (510 aa).

Residues aspartate 13 and serine 63 each coordinate Mn(2+). Serine 63 serves as the catalytic Phosphoserine intermediate. Substrate contacts are provided by residues histidine 124, 154 to 155 (RD), arginine 186, arginine 192, 262 to 265 (RADR), and lysine 334. Aspartate 401, histidine 405, aspartate 442, histidine 443, and histidine 461 together coordinate Mn(2+).

It belongs to the BPG-independent phosphoglycerate mutase family. As to quaternary structure, monomer. It depends on Mn(2+) as a cofactor.

The enzyme catalyses (2R)-2-phosphoglycerate = (2R)-3-phosphoglycerate. It functions in the pathway carbohydrate degradation; glycolysis; pyruvate from D-glyceraldehyde 3-phosphate: step 3/5. Functionally, catalyzes the interconversion of 2-phosphoglycerate and 3-phosphoglycerate. This is 2,3-bisphosphoglycerate-independent phosphoglycerate mutase from Vibrio vulnificus (strain YJ016).